The chain runs to 236 residues: Three prime repair exonuclease 2 (236 aa).

Mg(2+)-binding residues include Asp14 and Glu16. Residues 16–17 and Tyr122 each bind substrate; that span reads EA. His188 serves as the catalytic Proton donor/acceptor. Asp193 provides a ligand contact to Mg(2+). Residue Asp193 coordinates substrate.

This sequence belongs to the exonuclease superfamily. TREX family. Homodimer. Mg(2+) serves as cofactor. As to expression, detected in heart, breast, prostate, skeletal muscle, testis, uterus, bone marrow, colon, small intestine, stomach and thymus.

The protein localises to the nucleus. It catalyses the reaction Exonucleolytic cleavage in the 3'- to 5'-direction to yield nucleoside 5'-phosphates.. Functionally, exonuclease with a preference for double-stranded DNA with mismatched 3' termini. May play a role in DNA repair. The protein is Three prime repair exonuclease 2 (TREX2) of Homo sapiens (Human).